Reading from the N-terminus, the 146-residue chain is Protein archease (146 aa).

Ca(2+) contacts are provided by Asp16, Asp145, and Ile146.

Belongs to the archease family.

Functionally, activates the tRNA-splicing ligase complex by facilitating the enzymatic turnover of catalytic subunit RtcB. Acts by promoting the guanylylation of RtcB, a key intermediate step in tRNA ligation. Can also alter the NTP specificity of RtcB such that ATP, dGTP or ITP is used efficiently. The sequence is that of Protein archease from Methanosarcina barkeri (strain Fusaro / DSM 804).